We begin with the raw amino-acid sequence, 80 residues long: Large ribosomal subunit protein uL24 (80 aa).

This sequence belongs to the universal ribosomal protein uL24 family. Part of the 50S ribosomal subunit.

In terms of biological role, one of two assembly initiator proteins, it binds directly to the 5'-end of the 23S rRNA, where it nucleates assembly of the 50S subunit. Functionally, one of the proteins that surrounds the polypeptide exit tunnel on the outside of the subunit. The sequence is that of Large ribosomal subunit protein uL24 from Chlorobium phaeobacteroides (strain DSM 266 / SMG 266 / 2430).